Consider the following 564-residue polypeptide: Hsp70-Hsp90 organising protein (564 aa).

TPR repeat units follow at residues 7 to 40 (AQRL…DPLD), 42 to 74 (VLYS…KKDW), and 76 to 108 (KGYI…DPNN). Residues 197–239 (EGNDAEERQRQQREEEERRKKKEEEERKKKEEEEMKKQNRTPE) are a coiled coil. Residues 199–247 (NDAEERQRQQREEEERRKKKEEEERKKKEEEEMKKQNRTPEQIQGDEHK) are disordered. Over residues 201-233 (AEERQRQQREEEERRKKKEEEERKKKEEEEMKK) the composition is skewed to basic and acidic residues. TPR repeat units lie at residues 243 to 276 (GDEH…NPND), 278 to 310 (MYHY…RYNF), 318 to 351 (AKLY…DNNR), 378 to 411 (AEEH…NPND), 413 to 445 (KLYS…DPTF), and 446 to 479 (VKAY…DPNN). In terms of domain architecture, STI1 spans 513–552 (DPEIQQIISDPQFQIILQKLNENPNSISEYIKDPKIFNGL).

In terms of assembly, monomer. Homodimer. Forms a complex composed of HOP and chaperones HSP70 and HSP90; the interaction is stronger in the absence of ATP. Interacts (via TPR 1, 2, 3, 7, 8 and 9 repeats) with HSP70 (via C-terminus); the interaction is direct and is stronger in the absence of ATP. Interacts (via TPR 4, 5 and 6 repeats) with HSP90 (via C-terminus); the interaction is direct.

The protein localises to the cytoplasm. In terms of biological role, acts as a co-chaperone and mediates the association of the chaperones HSP70 and HSP90 probably facilitating substrate transfer from HSP70 to HSP90. Stimulates HSP70 ATPase activity and, in contrast, inhibits HSP90 ATPase activity. This Plasmodium falciparum (isolate 3D7) protein is Hsp70-Hsp90 organising protein.